The primary structure comprises 233 residues: Small ribosomal subunit protein uS3 (233 aa).

In terms of domain architecture, KH type-2 spans 39 to 107; that stretch reads VRKYLTKELE…PAQINIAEVR (69 aa). The segment at 214-233 is disordered; sequence VEQPEKPSAQPKKQQRKGRK.

The protein belongs to the universal ribosomal protein uS3 family. In terms of assembly, part of the 30S ribosomal subunit. Forms a tight complex with proteins S10 and S14.

Functionally, binds the lower part of the 30S subunit head. Binds mRNA in the 70S ribosome, positioning it for translation. The chain is Small ribosomal subunit protein uS3 from Pectobacterium atrosepticum (strain SCRI 1043 / ATCC BAA-672) (Erwinia carotovora subsp. atroseptica).